The following is a 306-amino-acid chain: Ribosomal protein L11 methyltransferase (306 aa).

T154, G179, D201, and N242 together coordinate S-adenosyl-L-methionine.

It belongs to the methyltransferase superfamily. PrmA family.

The protein resides in the cytoplasm. It catalyses the reaction L-lysyl-[protein] + 3 S-adenosyl-L-methionine = N(6),N(6),N(6)-trimethyl-L-lysyl-[protein] + 3 S-adenosyl-L-homocysteine + 3 H(+). Its function is as follows. Methylates ribosomal protein L11. This is Ribosomal protein L11 methyltransferase from Xanthomonas campestris pv. campestris (strain 8004).